Consider the following 947-residue polypeptide: Serine-aspartate repeat-containing protein C (947 aa).

A signal peptide spans Met1–Ala50. The YSIRK-G/S signaling motif motif lies at Phe21–Ser32. The disordered stretch occupies residues Ala51–Lys164. The ligand binding A region stretch occupies residues Ala51–Lys495. A compositionally biased stretch (polar residues) spans Gly56–Asn71. Residues Lys72–Lys83 show a composition bias toward basic and acidic residues. Over residues Asp84–Ser155 the composition is skewed to polar residues. CNA-B domains are found at residues Lys496 to Pro606 and Lys607 to Thr717. The interval Thr678–Gly927 is disordered. Acidic residues-rich tracts occupy residues Thr685 to Glu695 and Tyr712 to Ser886. Residues Leu910–Gly914 carry the LPXTG sorting signal motif. Over residues Glu912–Gly927 the composition is skewed to low complexity. Thr913 carries the post-translational modification Pentaglycyl murein peptidoglycan amidated threonine. The propeptide at Gly914–Lys947 is removed by sortase.

Belongs to the serine-aspartate repeat-containing protein (SDr) family. Homodimerizes; via N2-Domain. Interacts with host NRXN1; this interaction mediates bacterial attachment to host cells.

It is found in the secreted. The protein localises to the cell wall. Functionally, cell surface-associated calcium-binding protein which plays an important role in adhesion and pathogenesis. Mediates interactions with components of the extracellular matrix such as host NRXN1 to promote bacterial adhesion. This chain is Serine-aspartate repeat-containing protein C (sdrC), found in Staphylococcus aureus (strain Newman).